Reading from the N-terminus, the 605-residue chain is MTDLALIRNFSIIAHIDHGKSTLADRLIQYTGGLTEREMSEQVLDNMDIEKERGITIKAQTVRLDYTGKDGKTYQLNLMDTPGHVDFAYEVSRSLAACEGALLVVDAAQGVEAQTLANVYQSIEHDHEIVPVINKIDLPAAEPEKVKAEIEDVIGLDASNAVLTSAKSGIGIEEVLDAVVERIPPPKGDRSAPLKAMLVDSWYDPYLGVVILVRVIDGVIRKGLQVKFMAGGTEHLIDRVGCMRPKIETLDELGPGEIGFITAQIKEVAQARVGDTITTVKQGASEALPGFKEVQPVVFCGIFPVDAADFEKLRESIAKLRLNDASFSFEMESSAALGFGFRCGFLGLLHLEIIQERLSREYDLDLITTAPSVVYRIQLRASRNDDAREILLHNPADYPDPSRIETIEEPWIKGTIYTPDEYLGSVLKLCQDRRGIQTGLTYVGGRAQVTYELPLNEVVFDFYDRLKSISRGYASFDYEQVGLREGDLVKMSILVNNEPVDALSMIVHRSAAEARGRHMCERLKDLIPRHLFKIPIQAAIGGKVVARETISAMRKDVTAKCYGGDITRKKKLLEKQKKGKARMREYGNVSIPQEAFIAALRMGEE.

Residues 5–187 form the tr-type G domain; sequence ALIRNFSIIA…AVVERIPPPK (183 aa). Residues 17 to 22 and 134 to 137 each bind GTP; these read DHGKST and NKID.

The protein belongs to the TRAFAC class translation factor GTPase superfamily. Classic translation factor GTPase family. LepA subfamily.

The protein localises to the cell inner membrane. It carries out the reaction GTP + H2O = GDP + phosphate + H(+). Required for accurate and efficient protein synthesis under certain stress conditions. May act as a fidelity factor of the translation reaction, by catalyzing a one-codon backward translocation of tRNAs on improperly translocated ribosomes. Back-translocation proceeds from a post-translocation (POST) complex to a pre-translocation (PRE) complex, thus giving elongation factor G a second chance to translocate the tRNAs correctly. Binds to ribosomes in a GTP-dependent manner. This Novosphingobium aromaticivorans (strain ATCC 700278 / DSM 12444 / CCUG 56034 / CIP 105152 / NBRC 16084 / F199) protein is Elongation factor 4.